A 183-amino-acid chain; its full sequence is Protein jagunal homolog 1-B (183 aa).

The Cytoplasmic segment spans residues 1 to 39 (MASRAGPRATGTDGSDYQHRERVASHYQMSVALKSEIKK). Residues 40 to 60 (LNIAHAVVWFLVAAQVLVSQL) form a helical membrane-spanning segment. Residues 61–71 (NLVSHKVVASP) lie on the Lumenal side of the membrane. The helical transmembrane segment at 72-92 (YQWEYTYLLSIIPTVFSFMAL) threads the bilayer. Topologically, residues 93–99 (PKNNISY) are cytoplasmic. A helical transmembrane segment spans residues 100 to 120 (LVISMISGGLFCIGPILYGGM). At 121–137 (EMFPVAQQLYRHGKAYR) the chain is on the lumenal side. The chain crosses the membrane as a helical span at residues 138-158 (FIFGFSAVSIMYLVLIISVQV). The Cytoplasmic segment spans residues 159–183 (HGWQIYYSKKLLDAWFTNTQDKKKK).

It belongs to the jagunal family.

The protein resides in the endoplasmic reticulum membrane. Its function is as follows. Endoplasmic reticulum transmembrane protein involved in vesicle-mediated transport, which is required for neutrophil function. The polypeptide is Protein jagunal homolog 1-B (jagn1b) (Danio rerio (Zebrafish)).